A 315-amino-acid polypeptide reads, in one-letter code: Ribose-phosphate pyrophosphokinase (315 aa).

Residues 37 to 39 (DGE) and 96 to 97 (RQ) contribute to the ATP site. Positions 131 and 171 each coordinate Mg(2+). The active site involves Lys195. D-ribose 5-phosphate contacts are provided by residues Arg197, Asp221, and 225–229 (DTGGT).

It belongs to the ribose-phosphate pyrophosphokinase family. Class I subfamily. Homohexamer. Requires Mg(2+) as cofactor.

It is found in the cytoplasm. The enzyme catalyses D-ribose 5-phosphate + ATP = 5-phospho-alpha-D-ribose 1-diphosphate + AMP + H(+). It functions in the pathway metabolic intermediate biosynthesis; 5-phospho-alpha-D-ribose 1-diphosphate biosynthesis; 5-phospho-alpha-D-ribose 1-diphosphate from D-ribose 5-phosphate (route I): step 1/1. In terms of biological role, involved in the biosynthesis of the central metabolite phospho-alpha-D-ribosyl-1-pyrophosphate (PRPP) via the transfer of pyrophosphoryl group from ATP to 1-hydroxyl of ribose-5-phosphate (Rib-5-P). In Haemophilus influenzae (strain ATCC 51907 / DSM 11121 / KW20 / Rd), this protein is Ribose-phosphate pyrophosphokinase.